Consider the following 797-residue polypeptide: Leucine-rich repeat-containing protein AAC1 (797 aa).

Positions Met-1–Thr-12 are enriched in basic and acidic residues. Disordered stretches follow at residues Met-1–Thr-20, Tyr-51–Thr-103, Asn-125–Thr-148, and His-307–Ala-333. Positions Asn-55–Ser-81 are enriched in polar residues. The span at Thr-82–Thr-103 shows a compositional bias: low complexity. Residues Ser-313–Ile-326 show a composition bias toward pro residues. LRR repeat units lie at residues Lys-376 to Ser-397, Thr-406 to Ser-425, Val-435 to Lys-456, Gln-464 to Lys-484, Ser-492 to Lys-513, Ser-514 to Ser-535, Ser-543 to Ser-564, Thr-572 to Val-593, Ser-601 to Gln-622, and Pro-633 to Ile-653.

The polypeptide is Leucine-rich repeat-containing protein AAC1 (AAC1) (Dictyostelium discoideum (Social amoeba)).